The following is a 506-amino-acid chain: Maturase K (506 aa).

The protein belongs to the intron maturase 2 family. MatK subfamily.

It is found in the plastid. It localises to the chloroplast. In terms of biological role, usually encoded in the trnK tRNA gene intron. Probably assists in splicing its own and other chloroplast group II introns. The sequence is that of Maturase K from Gaultheria procumbens (Wintergreen).